A 267-amino-acid chain; its full sequence is O-methyltransferase (267 aa).

Q100 and H145 together coordinate S-adenosyl-L-methionine.

The protein belongs to the methyltransferase superfamily.

The protein operates within antifungal biosynthesis. Functionally, O-methyltransferase; part of the gene cluster that mediates the biosynthesis of the tetrahydropyranyl antifungal agent lanomycin that acts as an inhibitor of CYP51 and blocks the ergosterol biosynthesis. The biosynthesis probably begins with the formation of an hexaketide, followed by methionine mediated alkylation of C-2 and C-6, and methylation of the reduced C-3 oxygen, pyran forming reductive ring closure, oxygenation of C-4, beta-keto reduction, enoyl reduction and dehydration of the remaining oxygens, and finally, acylation with glycine to complete the biosynthesis. The chain is O-methyltransferase from Pyrenophora dematioidea (Helminthosporium dematioideum).